A 157-amino-acid polypeptide reads, in one-letter code: Phosphopantetheine adenylyltransferase (157 aa).

S9 contacts substrate. ATP contacts are provided by residues 9-10 and H17; that span reads SF. Residues K41, V73, and K87 each coordinate substrate. Residues 88-90, E98, and 122-128 each bind ATP; these read GLR and YSFVSSS.

This sequence belongs to the bacterial CoaD family. In terms of assembly, homohexamer. Mg(2+) serves as cofactor.

It is found in the cytoplasm. The catalysed reaction is (R)-4'-phosphopantetheine + ATP + H(+) = 3'-dephospho-CoA + diphosphate. Its pathway is cofactor biosynthesis; coenzyme A biosynthesis; CoA from (R)-pantothenate: step 4/5. Functionally, reversibly transfers an adenylyl group from ATP to 4'-phosphopantetheine, yielding dephospho-CoA (dPCoA) and pyrophosphate. The chain is Phosphopantetheine adenylyltransferase from Mycobacterium marinum (strain ATCC BAA-535 / M).